The following is a 589-amino-acid chain: Intermediate filament protein B (589 aa).

The head stretch occupies residues 1–84 (SLKQSQESSE…LEATDKEKKE (84 aa)). The IF rod domain maps to 81-433 (EKKEMQGLND…KMLEGEESRV (353 aa)). The tract at residues 85–116 (MQGLNDRLGNYIDRVKKLEEQNRKLVADLDEL) is coil 1A. The segment at 117-130 (RGRWGKDTSEIKIQ) is linker 1. The coil 1B stretch occupies residues 131-268 (YSDSLRDARK…RVHEQEVKEL (138 aa)). Residues 269-285 (QALLAQAPADTREFFKN) are linker 12. The segment at 286 to 433 (ELALAIRDIK…KMLEGEESRV (148 aa)) is coil 2. A tail region spans residues 434-589 (GLRQMVEQVV…HTQKTIQTGQ (156 aa)). Residues 446–470 (HSLQQQEDTDSTRNVRGEVSTKTTF) are disordered. The LTD domain occupies 466 to 584 (TKTTFQRSAK…DERATHTQKT (119 aa)).

It belongs to the intermediate filament family. As to quaternary structure, a and B can form homopolymers. As to expression, giant body muscle cells.

It is found in the cytoplasm. The sequence is that of Intermediate filament protein B from Ascaris suum (Pig roundworm).